We begin with the raw amino-acid sequence, 400 residues long: Glycerol-3-phosphate dehydrogenase [NAD(+)] 1 (400 aa).

NAD(+)-binding positions include 50–55 (GSGNWG), Phe138, Lys161, and Ala194. Lys161 is a substrate binding site. The active-site Proton acceptor is Lys254. NAD(+) is bound by residues Arg319 and Gln348. 319–320 (RN) contacts substrate.

The protein belongs to the NAD-dependent glycerol-3-phosphate dehydrogenase family.

It catalyses the reaction sn-glycerol 3-phosphate + NAD(+) = dihydroxyacetone phosphate + NADH + H(+). The polypeptide is Glycerol-3-phosphate dehydrogenase [NAD(+)] 1 (GPD1) (Candida glabrata (strain ATCC 2001 / BCRC 20586 / JCM 3761 / NBRC 0622 / NRRL Y-65 / CBS 138) (Yeast)).